A 312-amino-acid polypeptide reads, in one-letter code: Malate dehydrogenase (312 aa).

Residues 12–17 and D36 each bind NAD(+); that span reads GAGFTG. Positions 87 and 93 each coordinate substrate. NAD(+) contacts are provided by residues N100 and 123–125; that span reads LTN. A substrate-binding site is contributed by N125. A Phosphoserine modification is found at S149. Substrate is bound at residue R156. The active-site Proton acceptor is the H180.

The protein belongs to the LDH/MDH superfamily. MDH type 3 family.

The catalysed reaction is (S)-malate + NAD(+) = oxaloacetate + NADH + H(+). Catalyzes the reversible oxidation of malate to oxaloacetate. In Bacillus cereus (strain ATCC 14579 / DSM 31 / CCUG 7414 / JCM 2152 / NBRC 15305 / NCIMB 9373 / NCTC 2599 / NRRL B-3711), this protein is Malate dehydrogenase.